Here is a 479-residue protein sequence, read N- to C-terminus: Ribosomal RNA small subunit methyltransferase F (479 aa).

S-adenosyl-L-methionine contacts are provided by residues 125 to 131 (AAAPGSK), Glu-149, Asp-176, and Asp-194. The Nucleophile role is filled by Cys-247.

The protein belongs to the class I-like SAM-binding methyltransferase superfamily. RsmB/NOP family.

Its subcellular location is the cytoplasm. It catalyses the reaction cytidine(1407) in 16S rRNA + S-adenosyl-L-methionine = 5-methylcytidine(1407) in 16S rRNA + S-adenosyl-L-homocysteine + H(+). Specifically methylates the cytosine at position 1407 (m5C1407) of 16S rRNA. This Escherichia coli O157:H7 (strain EC4115 / EHEC) protein is Ribosomal RNA small subunit methyltransferase F.